We begin with the raw amino-acid sequence, 570 residues long: Hydroxylamine reductase (570 aa).

Positions 5, 8, 17, and 23 each coordinate [4Fe-4S] cluster. Hybrid [4Fe-2O-2S] cluster-binding residues include His-266, Glu-290, Cys-334, Cys-425, Cys-453, Cys-478, Glu-513, and Lys-515. Cys-425 bears the Cysteine persulfide mark.

Belongs to the HCP family. [4Fe-4S] cluster is required as a cofactor. Hybrid [4Fe-2O-2S] cluster serves as cofactor.

It localises to the cytoplasm. The catalysed reaction is A + NH4(+) + H2O = hydroxylamine + AH2 + H(+). Functionally, catalyzes the reduction of hydroxylamine to form NH(3) and H(2)O. The sequence is that of Hydroxylamine reductase from Clostridium botulinum (strain 657 / Type Ba4).